Reading from the N-terminus, the 225-residue chain is Probable polyketide biosynthesis zinc-dependent hydrolase BaeB (225 aa).

Zn(2+) is bound by residues histidine 62, histidine 64, aspartate 66, histidine 67, histidine 123, aspartate 140, and histidine 181.

Belongs to the metallo-beta-lactamase superfamily. Requires Zn(2+) as cofactor.

The protein localises to the cytoplasm. It functions in the pathway antibiotic biosynthesis; bacillaene biosynthesis. Functionally, probably involved in some intermediate steps for the synthesis of the antibiotic polyketide bacillaene which is involved in secondary metabolism. The protein is Probable polyketide biosynthesis zinc-dependent hydrolase BaeB (baeB) of Bacillus velezensis (strain DSM 23117 / BGSC 10A6 / LMG 26770 / FZB42) (Bacillus amyloliquefaciens subsp. plantarum).